The sequence spans 503 residues: Maturase K (503 aa).

The protein belongs to the intron maturase 2 family. MatK subfamily.

Its subcellular location is the plastid. It is found in the chloroplast. In terms of biological role, usually encoded in the trnK tRNA gene intron. Probably assists in splicing its own and other chloroplast group II introns. The chain is Maturase K from Vicia faba (Broad bean).